Reading from the N-terminus, the 352-residue chain is Isopentenyl-diphosphate delta-isomerase (352 aa).

6–7 (RK) is a substrate binding site. Residues 63–65 (AMT), serine 93, and asparagine 122 each bind FMN. 93–95 (SQR) provides a ligand contact to substrate. A substrate-binding site is contributed by glutamine 160. Glutamate 161 serves as a coordination point for Mg(2+). Residues lysine 192, threonine 221, 271 to 273 (GIR), and 292 to 293 (SQ) contribute to the FMN site.

The protein belongs to the IPP isomerase type 2 family. As to quaternary structure, homooctamer. Dimer of tetramers. FMN serves as cofactor. NADPH is required as a cofactor. It depends on Mg(2+) as a cofactor.

The protein localises to the cytoplasm. It catalyses the reaction isopentenyl diphosphate = dimethylallyl diphosphate. Functionally, involved in the biosynthesis of isoprenoids. Catalyzes the 1,3-allylic rearrangement of the homoallylic substrate isopentenyl (IPP) to its allylic isomer, dimethylallyl diphosphate (DMAPP). In Pyrobaculum aerophilum (strain ATCC 51768 / DSM 7523 / JCM 9630 / CIP 104966 / NBRC 100827 / IM2), this protein is Isopentenyl-diphosphate delta-isomerase.